An 84-amino-acid chain; its full sequence is Beta-defensin 119 (84 aa).

An N-terminal signal peptide occupies residues 1 to 21; it reads MKLLYLFLAILLAIEEPVISG. Cystine bridges form between Cys-28–Cys-55, Cys-35–Cys-49, and Cys-39–Cys-56.

This sequence belongs to the beta-defensin family. In terms of tissue distribution, abundant expression in the male reproductive tract only. Abundant expressed in testis and the caput region of epididymis, but low in the corpus region.

The protein resides in the secreted. Functionally, has antibacterial activity. The polypeptide is Beta-defensin 119 (DEFB119) (Homo sapiens (Human)).